A 391-amino-acid polypeptide reads, in one-letter code: Na(+)/H(+) antiporter NhaA 1 (391 aa).

A run of 11 helical transmembrane segments spans residues 19 to 39 (FLAS…AALI), 56 to 76 (VWLG…IFFL), 98 to 118 (ALPG…YIAI), 128 to 148 (GWAI…SLLG), 157 to 177 (VFLA…IAFF), 180 to 200 (SGLN…LIAL), 208 to 228 (LLPY…SGVH), 264 to 284 (VAFA…LSGI), 297 to 317 (VALG…VLAI), 335 to 355 (GVAI…NLAF), and 364 to 384 (EVKV…ILLL).

Belongs to the NhaA Na(+)/H(+) (TC 2.A.33) antiporter family.

The protein resides in the cell inner membrane. It carries out the reaction Na(+)(in) + 2 H(+)(out) = Na(+)(out) + 2 H(+)(in). Functionally, na(+)/H(+) antiporter that extrudes sodium in exchange for external protons. This Pseudomonas savastanoi pv. phaseolicola (strain 1448A / Race 6) (Pseudomonas syringae pv. phaseolicola (strain 1448A / Race 6)) protein is Na(+)/H(+) antiporter NhaA 1.